We begin with the raw amino-acid sequence, 474 residues long: Synaptotagmin-17 (474 aa).

Positions 60-112 (WLMASRSSDKDGDSVHTASEVPLTPRTNSPDGRRSSSDTSKSTYSLTRRISSL) are disordered. Positions 96-112 (SDTSKSTYSLTRRISSL) are enriched in low complexity. Ser118 and Ser119 each carry phosphoserine. 2 consecutive C2 domains span residues 184–310 (QLGM…HWWK) and 321–455 (ELGE…EQWH).

It belongs to the synaptotagmin family.

Its subcellular location is the membrane. In terms of biological role, plays a role in dendrite formation by melanocytes. The sequence is that of Synaptotagmin-17 (SYT17) from Pongo abelii (Sumatran orangutan).